A 358-amino-acid chain; its full sequence is UDP-N-acetylglucosamine--N-acetylmuramyl-(pentapeptide) pyrophosphoryl-undecaprenol N-acetylglucosamine transferase (358 aa).

UDP-N-acetyl-alpha-D-glucosamine contacts are provided by residues 10 to 12 (TGG), Asn-124, Arg-165, Ser-187, Ile-243, and Gln-288.

The protein belongs to the glycosyltransferase 28 family. MurG subfamily.

The protein localises to the cell inner membrane. It catalyses the reaction di-trans,octa-cis-undecaprenyl diphospho-N-acetyl-alpha-D-muramoyl-L-alanyl-D-glutamyl-meso-2,6-diaminopimeloyl-D-alanyl-D-alanine + UDP-N-acetyl-alpha-D-glucosamine = di-trans,octa-cis-undecaprenyl diphospho-[N-acetyl-alpha-D-glucosaminyl-(1-&gt;4)]-N-acetyl-alpha-D-muramoyl-L-alanyl-D-glutamyl-meso-2,6-diaminopimeloyl-D-alanyl-D-alanine + UDP + H(+). It participates in cell wall biogenesis; peptidoglycan biosynthesis. Its function is as follows. Cell wall formation. Catalyzes the transfer of a GlcNAc subunit on undecaprenyl-pyrophosphoryl-MurNAc-pentapeptide (lipid intermediate I) to form undecaprenyl-pyrophosphoryl-MurNAc-(pentapeptide)GlcNAc (lipid intermediate II). The protein is UDP-N-acetylglucosamine--N-acetylmuramyl-(pentapeptide) pyrophosphoryl-undecaprenol N-acetylglucosamine transferase of Syntrophotalea carbinolica (strain DSM 2380 / NBRC 103641 / GraBd1) (Pelobacter carbinolicus).